A 147-amino-acid chain; its full sequence is uncharacterized protein (147 aa).

The region spanning 11 to 147 (NTSPGFLLWQ…SGLQELLKHE (137 aa)) is the HTH marR-type domain. The segment at residues 61 to 84 (QKKLASFSQTNIMMVSEVVRTLEK) is a DNA-binding region (H-T-H motif).

This is an uncharacterized protein from Bacillus subtilis (strain 168).